Reading from the N-terminus, the 930-residue chain is Translation initiation factor IF-2 (930 aa).

Disordered stretches follow at residues Glu160–Gly179 and Ala208–Pro301. Basic and acidic residues predominate over residues Ala208–Asp227. Composition is skewed to basic residues over residues Gly263–Gly272 and Lys288–Pro301. The 170-residue stretch at Thr431–Thr600 folds into the tr-type G domain. The G1 stretch occupies residues Gly440–Thr447. Gly440–Thr447 provides a ligand contact to GTP. The tract at residues Gly465–His469 is G2. A G3 region spans residues Asp486–Gly489. Residues Asp486–His490 and Asn540–Asp543 contribute to the GTP site. The segment at Asn540–Asp543 is G4. Residues Ser576–His578 form a G5 region.

This sequence belongs to the TRAFAC class translation factor GTPase superfamily. Classic translation factor GTPase family. IF-2 subfamily.

It localises to the cytoplasm. One of the essential components for the initiation of protein synthesis. Protects formylmethionyl-tRNA from spontaneous hydrolysis and promotes its binding to the 30S ribosomal subunits. Also involved in the hydrolysis of GTP during the formation of the 70S ribosomal complex. The protein is Translation initiation factor IF-2 of Cellvibrio japonicus (strain Ueda107) (Pseudomonas fluorescens subsp. cellulosa).